Here is a 415-residue protein sequence, read N- to C-terminus: Serine--tRNA ligase (415 aa).

An L-serine-binding site is contributed by threonine 230 to glutamate 232. Arginine 261–glutamate 263 provides a ligand contact to ATP. Glutamate 284 serves as a coordination point for L-serine. Residue glutamate 348–serine 351 participates in ATP binding. Serine 382 contributes to the L-serine binding site.

Belongs to the class-II aminoacyl-tRNA synthetase family. Type-1 seryl-tRNA synthetase subfamily. As to quaternary structure, homodimer. The tRNA molecule binds across the dimer.

The protein localises to the cytoplasm. It carries out the reaction tRNA(Ser) + L-serine + ATP = L-seryl-tRNA(Ser) + AMP + diphosphate + H(+). The catalysed reaction is tRNA(Sec) + L-serine + ATP = L-seryl-tRNA(Sec) + AMP + diphosphate + H(+). It functions in the pathway aminoacyl-tRNA biosynthesis; selenocysteinyl-tRNA(Sec) biosynthesis; L-seryl-tRNA(Sec) from L-serine and tRNA(Sec): step 1/1. Functionally, catalyzes the attachment of serine to tRNA(Ser). Is also able to aminoacylate tRNA(Sec) with serine, to form the misacylated tRNA L-seryl-tRNA(Sec), which will be further converted into selenocysteinyl-tRNA(Sec). This is Serine--tRNA ligase from Sulfurimonas denitrificans (strain ATCC 33889 / DSM 1251) (Thiomicrospira denitrificans (strain ATCC 33889 / DSM 1251)).